Consider the following 503-residue polypeptide: Glycerol kinase (503 aa).

Thr14 is a binding site for ADP. ATP-binding residues include Thr14, Thr15, and Ser16. A sn-glycerol 3-phosphate-binding site is contributed by Thr14. Position 18 (Arg18) interacts with ADP. The sn-glycerol 3-phosphate site is built by Arg84, Glu85, Tyr136, and Asp246. Residues Arg84, Glu85, Tyr136, Asp246, and Gln247 each contribute to the glycerol site. Residues Thr268 and Gly311 each contribute to the ADP site. Residues Thr268, Gly311, Gln315, and Gly412 each contribute to the ATP site. Positions 412 and 416 each coordinate ADP.

The protein belongs to the FGGY kinase family.

The enzyme catalyses glycerol + ATP = sn-glycerol 3-phosphate + ADP + H(+). It participates in polyol metabolism; glycerol degradation via glycerol kinase pathway; sn-glycerol 3-phosphate from glycerol: step 1/1. With respect to regulation, inhibited by fructose 1,6-bisphosphate (FBP). Functionally, key enzyme in the regulation of glycerol uptake and metabolism. Catalyzes the phosphorylation of glycerol to yield sn-glycerol 3-phosphate. The chain is Glycerol kinase from Haemophilus influenzae (strain 86-028NP).